Reading from the N-terminus, the 546-residue chain is Chaperonin GroEL (546 aa).

Residues 30–33 (TLGP), Lys-51, 87–91 (DGTTT), Gly-415, 479–481 (NAA), and Asp-495 contribute to the ATP site.

Belongs to the chaperonin (HSP60) family. As to quaternary structure, forms a cylinder of 14 subunits composed of two heptameric rings stacked back-to-back. Interacts with the co-chaperonin GroES.

It localises to the cytoplasm. It carries out the reaction ATP + H2O + a folded polypeptide = ADP + phosphate + an unfolded polypeptide.. Together with its co-chaperonin GroES, plays an essential role in assisting protein folding. The GroEL-GroES system forms a nano-cage that allows encapsulation of the non-native substrate proteins and provides a physical environment optimized to promote and accelerate protein folding. This is Chaperonin GroEL from Pseudomonas putida (strain ATCC 47054 / DSM 6125 / CFBP 8728 / NCIMB 11950 / KT2440).